The sequence spans 157 residues: Ribosomal RNA large subunit methyltransferase H (157 aa).

S-adenosyl-L-methionine contacts are provided by residues glycine 106 and 125–130; that span reads LSEMTF.

This sequence belongs to the RNA methyltransferase RlmH family. Homodimer.

The protein resides in the cytoplasm. The enzyme catalyses pseudouridine(1915) in 23S rRNA + S-adenosyl-L-methionine = N(3)-methylpseudouridine(1915) in 23S rRNA + S-adenosyl-L-homocysteine + H(+). Specifically methylates the pseudouridine at position 1915 (m3Psi1915) in 23S rRNA. This is Ribosomal RNA large subunit methyltransferase H from Syntrophobacter fumaroxidans (strain DSM 10017 / MPOB).